Here is a 161-residue protein sequence, read N- to C-terminus: Early E3 17.7 kDa glycoprotein (161 aa).

N-linked (GlcNAc...) asparagine; by host glycosylation is found at Asn14 and Asn87. A helical transmembrane segment spans residues Ile102–Asn129.

The protein localises to the host membrane. This is Early E3 17.7 kDa glycoprotein from Murine adenovirus A serotype 1 (MAdV-1).